The sequence spans 536 residues: Testis-specific protein 10-interacting protein (536 aa).

Disordered regions lie at residues 1–94 (MLNT…LFSS), 185–234 (SQGL…PGQG), and 246–305 (MEEE…FKGP). Residues 48 to 64 (SGDSLQSQSCQQQRSYS) show a composition bias toward low complexity. The span at 71 to 83 (KERKPRRRNKKGR) shows a compositional bias: basic residues. Residues 375-451 (QAWEQQQLKE…LQGIQHRVQA (77 aa)) adopt a coiled-coil conformation. A disordered region spans residues 491 to 536 (GNAEGIPRKHRSYRSFGVEMESSPQSPPKTEPTSSQPGRHPSPTLD).

This is Testis-specific protein 10-interacting protein (Tsga10ip) from Rattus norvegicus (Rat).